The primary structure comprises 146 residues: Decoration protein (146 aa).

As to quaternary structure, homotrimer. Interacts with the major capsid protein.

The protein localises to the virion. In terms of biological role, cooperatively binds the expanded capsid, thereby stabilizing the mature capsid shell and allowing the large viral DNA to be packaged. Trimers of capsid decoration proteins molecules are located at local and icosahedral threefold axes and stabilize the expanded capsid, which shows increased spacing between capsomers. The sequence is that of Decoration protein from Thermus thermophilus (Thermus thermophilus phage P23-45).